Consider the following 318-residue polypeptide: Pyrimidine-specific ribonucleoside hydrolase RihA (318 aa).

Histidine 240 is a catalytic residue.

This sequence belongs to the IUNH family. RihA subfamily.

Its function is as follows. Hydrolyzes cytidine or uridine to ribose and cytosine or uracil, respectively. The chain is Pyrimidine-specific ribonucleoside hydrolase RihA from Shewanella sp. (strain MR-4).